The sequence spans 446 residues: Exodeoxyribonuclease 7 large subunit (446 aa).

It belongs to the XseA family. In terms of assembly, heterooligomer composed of large and small subunits.

It localises to the cytoplasm. It catalyses the reaction Exonucleolytic cleavage in either 5'- to 3'- or 3'- to 5'-direction to yield nucleoside 5'-phosphates.. Bidirectionally degrades single-stranded DNA into large acid-insoluble oligonucleotides, which are then degraded further into small acid-soluble oligonucleotides. In Streptococcus pyogenes serotype M3 (strain ATCC BAA-595 / MGAS315), this protein is Exodeoxyribonuclease 7 large subunit.